The primary structure comprises 429 residues: Adenylosuccinate synthetase (429 aa).

Residues 12–18 (GDEGKGK) and 40–42 (GHT) each bind GTP. Asp13 functions as the Proton acceptor in the catalytic mechanism. Asp13 and Gly40 together coordinate Mg(2+). IMP is bound by residues 13–16 (DEGK), 38–41 (NAGH), Thr128, Arg142, Gln223, Thr238, and Arg302. His41 (proton donor) is an active-site residue. 298–304 (VNTGRPR) provides a ligand contact to substrate. GTP contacts are provided by residues Arg304, 330–332 (KLD), and 412–414 (GVG).

Belongs to the adenylosuccinate synthetase family. As to quaternary structure, homodimer. It depends on Mg(2+) as a cofactor.

Its subcellular location is the cytoplasm. It carries out the reaction IMP + L-aspartate + GTP = N(6)-(1,2-dicarboxyethyl)-AMP + GDP + phosphate + 2 H(+). The protein operates within purine metabolism; AMP biosynthesis via de novo pathway; AMP from IMP: step 1/2. In terms of biological role, plays an important role in the de novo pathway of purine nucleotide biosynthesis. Catalyzes the first committed step in the biosynthesis of AMP from IMP. This Kocuria rhizophila (strain ATCC 9341 / DSM 348 / NBRC 103217 / DC2201) protein is Adenylosuccinate synthetase.